Consider the following 337-residue polypeptide: GDP-mannose transporter 1 (337 aa).

The Cytoplasmic portion of the chain corresponds to 1-16 (MSELKTGHAGHNPWAS). Residues 17 to 37 (VANSGPISILSYCGSSILMTV) form a helical membrane-spanning segment. The Lumenal portion of the chain corresponds to 38-51 (TNKFVVNLKDFNMN). The chain crosses the membrane as a helical span at residues 52 to 72 (FVMLFVQSLVCTITLIILRIL). Over 73 to 92 (GYAKFRSLNKTDAKNWFPIS) the chain is Cytoplasmic. Residues 93 to 113 (FLLVLMIYTSSKALQYLAVPI) form a helical membrane-spanning segment. Over 114–119 (YTIFKN) the chain is Lumenal. N-linked (GlcNAc...) asparagine glycosylation occurs at Asn-119. Residues 120-140 (LTIILIAYGEVLFFGGSVTSM) traverse the membrane as a helical segment. The Cytoplasmic segment spans residues 141 to 144 (ELSS). Residues 145–165 (FLLMVLSSVVATWGDQQAVAA) form a helical membrane-spanning segment. The Lumenal portion of the chain corresponds to 166-180 (KAASLAEGAAGAVAS). A helical transmembrane segment spans residues 181–201 (FNPGYFWMFTNCITSALFVLI). At 202–215 (MRKRIKLTNFKDFD) the chain is on the cytoplasmic side. The helical transmembrane segment at 216–236 (TMFYNNVLALPILLLFSFCVE) threads the bilayer. Residues 237-252 (DWSSVNLTNNFSNDSL) lie on the Lumenal side of the membrane. 3 N-linked (GlcNAc...) asparagine glycosylation sites follow: Asn-242, Asn-246, and Asn-249. Residues 253-273 (TAMIISGVASVGISYCSGWCV) traverse the membrane as a helical segment. Residues 274–279 (RVTSST) lie on the Cytoplasmic side of the membrane. A helical transmembrane segment spans residues 280-300 (TYSMVGALNKLPIALSGLIFF). The Lumenal segment spans residues 301-304 (DAPR). A helical membrane pass occupies residues 305 to 325 (NFLSILSIFIGFLSGIIYAVA). Over 326–337 (KQKKQQAQPLRK) the chain is Cytoplasmic.

It belongs to the TPT transporter family. SLC35D subfamily. Homooligomer.

Its subcellular location is the golgi apparatus membrane. The protein localises to the cytoplasmic vesicle membrane. It localises to the endoplasmic reticulum membrane. Its function is as follows. Involved in the import of GDP-mannose from the cytoplasm into the Golgi lumen. Defective copy causes severe glycosylation defect and abnormal retention of soluble endoplasmic reticulum proteins. Involved in vanadate sensitivity. This chain is GDP-mannose transporter 1 (VRG4), found in Saccharomyces cerevisiae (strain YJM789) (Baker's yeast).